A 347-amino-acid polypeptide reads, in one-letter code: UDP-N-acetylglucosamine--N-acetylmuramyl-(pentapeptide) pyrophosphoryl-undecaprenol N-acetylglucosamine transferase (347 aa).

UDP-N-acetyl-alpha-D-glucosamine is bound by residues 11–13 (TGG), asparagine 122, arginine 163, serine 189, and glutamine 279.

This sequence belongs to the glycosyltransferase 28 family. MurG subfamily.

It is found in the cell inner membrane. The enzyme catalyses di-trans,octa-cis-undecaprenyl diphospho-N-acetyl-alpha-D-muramoyl-L-alanyl-D-glutamyl-meso-2,6-diaminopimeloyl-D-alanyl-D-alanine + UDP-N-acetyl-alpha-D-glucosamine = di-trans,octa-cis-undecaprenyl diphospho-[N-acetyl-alpha-D-glucosaminyl-(1-&gt;4)]-N-acetyl-alpha-D-muramoyl-L-alanyl-D-glutamyl-meso-2,6-diaminopimeloyl-D-alanyl-D-alanine + UDP + H(+). The protein operates within cell wall biogenesis; peptidoglycan biosynthesis. Functionally, cell wall formation. Catalyzes the transfer of a GlcNAc subunit on undecaprenyl-pyrophosphoryl-MurNAc-pentapeptide (lipid intermediate I) to form undecaprenyl-pyrophosphoryl-MurNAc-(pentapeptide)GlcNAc (lipid intermediate II). This chain is UDP-N-acetylglucosamine--N-acetylmuramyl-(pentapeptide) pyrophosphoryl-undecaprenol N-acetylglucosamine transferase, found in Sulfurihydrogenibium sp. (strain YO3AOP1).